Consider the following 78-residue polypeptide: MARVCQVTGKGPMVGNNVSHANNKTKRRFLPNLQSRRFWVESENRWVRLRVTAKAIRTIDKNGIDAVLADLRARGEAV.

The protein belongs to the bacterial ribosomal protein bL28 family.

The protein is Large ribosomal subunit protein bL28 of Bordetella avium (strain 197N).